The sequence spans 343 residues: Geranylgeranyl pyrophosphate synthase 1 (343 aa).

Residues Lys43, Arg46, and His75 each coordinate isopentenyl diphosphate. The Mg(2+) site is built by Asp82 and Asp86. Arg91 provides a ligand contact to dimethylallyl diphosphate. Arg92 is an isopentenyl diphosphate binding site. The dimethylallyl diphosphate site is built by Lys169, Thr170, and Gln212. Asp215 contributes to the Mg(2+) binding site. 3 residues coordinate dimethylallyl diphosphate: Asn219, Lys229, and Lys239.

Belongs to the FPP/GGPP synthase family. It depends on Mg(2+) as a cofactor.

It carries out the reaction isopentenyl diphosphate + dimethylallyl diphosphate = (2E)-geranyl diphosphate + diphosphate. The catalysed reaction is isopentenyl diphosphate + (2E)-geranyl diphosphate = (2E,6E)-farnesyl diphosphate + diphosphate. It catalyses the reaction isopentenyl diphosphate + (2E,6E)-farnesyl diphosphate = (2E,6E,10E)-geranylgeranyl diphosphate + diphosphate. Functionally, geranylgeranyl pyrophosphate synthase; part of the gene cluster 4 that mediates the biosynthesis of an isoprenoid secondary metabolite. The sequence is that of Geranylgeranyl pyrophosphate synthase 1 (GGS1) from Zymoseptoria tritici (strain CBS 115943 / IPO323) (Speckled leaf blotch fungus).